A 118-amino-acid polypeptide reads, in one-letter code: Large ribosomal subunit protein bL20 (118 aa).

Belongs to the bacterial ribosomal protein bL20 family.

Functionally, binds directly to 23S ribosomal RNA and is necessary for the in vitro assembly process of the 50S ribosomal subunit. It is not involved in the protein synthesizing functions of that subunit. The protein is Large ribosomal subunit protein bL20 of Bacillus anthracis (strain CDC 684 / NRRL 3495).